A 426-amino-acid polypeptide reads, in one-letter code: Alpha/beta hydrolase pydG (426 aa).

The protein belongs to the AB hydrolase superfamily. Homodimer.

It functions in the pathway mycotoxin biosynthesis. Functionally, alpha/beta hydrolasee; part of the gene cluster that mediates the biosynthesis of pyrrocidines, fungal natural products containing a macrocyclic para-cyclophane connected to a decahydrofluorene ring system that show potent antibiotic activities toward Gram-negative bacteria. Within the pathway, pydG catalyzes the Knoevenagel condensation that affords the 3-pyrrolin-2-one ring, using as substrate the polyketide-tyrosyl acyl thioester product of pydA. The pathway begins with the PKS-NRPS pydA which, with the help of the trans-enoyl reductase pydC, synthesizes the polyketide-tyrosyl acyl thioester product which can be reductively off-loaded by the terminal reductase (R) domain in pydA. The alpha/beta hydrolase pydG is then required to catalyze the subsequent Knoevenagel condensation that affords the 3-pyrrolin-2-one ring, whereas the four proteins pydB, pydE, pydX and pydZ then function synergistically to form the cyclophane. PydB and the membrane-bound pydX and pydZ are lipid-binding proteins that can sequester and mold the pdyG product into the inverse S-shape. Binding of the medium chain reductase pydE to the complex would trigger the cascade oxidative cyclization. PydY is involved in the Diels-Alder cycloaddition that forms the decahydrofluorene core. Additional non-enzymatic hydroxylation yields pyrrocidine A2 which can be further reduced into pyrrocidine B by an endogenous reductase. This is Alpha/beta hydrolase pydG from Acremonium sp.